The chain runs to 116 residues: uncharacterized protein (116 aa).

A helical transmembrane segment spans residues 22–42 (LIFLVVNLKVPAVGLELFLLV).

The protein localises to the membrane. This is an uncharacterized protein from Saccharomyces cerevisiae (strain ATCC 204508 / S288c) (Baker's yeast).